The primary structure comprises 185 residues: Threonylcarbamoyl-AMP synthase (185 aa).

Residues 5-185 (NWRVRLAARI…RDGRTGQRLR (181 aa)) enclose the YrdC-like domain.

The protein belongs to the SUA5 family. TsaC subfamily.

It localises to the cytoplasm. It catalyses the reaction L-threonine + hydrogencarbonate + ATP = L-threonylcarbamoyladenylate + diphosphate + H2O. Its function is as follows. Required for the formation of a threonylcarbamoyl group on adenosine at position 37 (t(6)A37) in tRNAs that read codons beginning with adenine. Catalyzes the conversion of L-threonine, HCO(3)(-)/CO(2) and ATP to give threonylcarbamoyl-AMP (TC-AMP) as the acyladenylate intermediate, with the release of diphosphate. This Nitrosococcus oceani (strain ATCC 19707 / BCRC 17464 / JCM 30415 / NCIMB 11848 / C-107) protein is Threonylcarbamoyl-AMP synthase.